A 306-amino-acid chain; its full sequence is Serine/threonine-protein phosphatase 2A catalytic subunit A (306 aa).

Mn(2+) contacts are provided by aspartate 54, histidine 56, aspartate 82, and asparagine 114. The active-site Proton donor is histidine 115. The Mn(2+) site is built by histidine 164 and histidine 238. At leucine 306 the chain carries Leucine methyl ester.

Belongs to the PPP phosphatase family. PP-2A subfamily. As to quaternary structure, PP2A consists of a trimeric holoenzyme, composed of a 37 kDa catalytic subunit (C subunit) and a 65 kDa constant regulatory subunit (A subunit), that associates with a variety of regulatory subunits (B subunit) such as phr2AB (B55) and psrA (B56 homolog). The trimer may partially dissociates into a core 'AC' dimer equally active compared to the trimer. Mn(2+) serves as cofactor. Reversibly methyl esterified on Leu-306 by leucine carboxyl methyltransferase 1 (LCMT) and protein phosphatase methylesterase 1 (PPME1). Carboxyl methylation influences the affinity of the catalytic subunit for the different regulatory subunits, thereby modulating the PP2A holoenzyme's substrate specificity, enzyme activity and cellular localization.

The protein localises to the cytoplasm. It localises to the cytosol. It is found in the nucleus speckle. The enzyme catalyses O-phospho-L-seryl-[protein] + H2O = L-seryl-[protein] + phosphate. It catalyses the reaction O-phospho-L-threonyl-[protein] + H2O = L-threonyl-[protein] + phosphate. In terms of biological role, plays a role in activating the myosin contractile function. Dephosphorylates threonine at 'Thr-1823', 'Thr-1833' and 'Thr-2029' in the C-terminal tail region of myosin II heavy chain (mhcA). Drives the assembly of dephosphorylated myosin II filaments to allow myosin recruitment into the cytoskeleton. This Dictyostelium discoideum (Social amoeba) protein is Serine/threonine-protein phosphatase 2A catalytic subunit A (pho2a).